Consider the following 356-residue polypeptide: Protein pelota homolog (356 aa).

This sequence belongs to the eukaryotic release factor 1 family. Pelota subfamily. As to quaternary structure, monomer. The cofactor is a divalent metal cation.

It localises to the cytoplasm. Its function is as follows. May function in recognizing stalled ribosomes, interact with stem-loop structures in stalled mRNA molecules, and effect endonucleolytic cleavage of the mRNA. May play a role in the release non-functional ribosomes and degradation of damaged mRNAs. Has endoribonuclease activity. The protein is Protein pelota homolog of Pyrococcus horikoshii (strain ATCC 700860 / DSM 12428 / JCM 9974 / NBRC 100139 / OT-3).